A 704-amino-acid polypeptide reads, in one-letter code: MARQVGLANVRNIGIMAHIDAGKTTTTERILYYTGRLHRMGEVHDGGATMDWMEQEKERGITITSAATTCFWEPKGGNFVDVKHRINIIDTPGHVDFTVEVERSLRVLDGAVALFCAVGGVEPQSETVWRQANKYKVPRIAYVNKMDRVGADFYAAVKAVKERLGANPVPIQIPIGQGEIFAGVVDLIRMKGIIYDKEDGSTFEEVEIPHDLETEAKHWRINMLEAVSEVDETLLEKYLEGEDITEAEVRKVLREATLNGSIIPALCGSSFKNKGVQFMLDAVIEYLPSPVDVGSVTGHHPGDDSGISRKPSDDEPFAGLAFKIATDPFVGKLTFFRVYSGVLEAGSYVLNALTGKKERVGRLMQMHSNKREDRDAVFAGDIAAAVGLKDVKTGDTLCDAGKPIVLEKMVFPEPVIQIAIEPKTKADSDKLGVSLGKLAEEDPTFRVSSDEETGQTLIAGMGELHLEVLVDRLKREFKVEANVGQPQVAYRETIRGTVEHEGKFVRQSGGKGQFGLVNIKVEPLEEGKGYEFVDAIKGGVVPKEYIPAVSAGIQEAMKDGVVAGYPVQDVKVTLYDGKYHDVDSSEMSFKIAGSIGFKGAARKANPVLLEPIMKVEVITPEEYLGDVMGDLSSRRGHIDGMGERAGAQFVKASVPLAQMFGYSTVLRSMTQGRANYTMEFECYNEVPKSVAEALQEKSGVKGDG.

The tr-type G domain maps to 8–291; it reads ANVRNIGIMA…AVIEYLPSPV (284 aa). Residues 17–24, 90–94, and 144–147 each bind GTP; these read AHIDAGKT, DTPGH, and NKMD.

Belongs to the TRAFAC class translation factor GTPase superfamily. Classic translation factor GTPase family. EF-G/EF-2 subfamily.

The protein resides in the cytoplasm. Catalyzes the GTP-dependent ribosomal translocation step during translation elongation. During this step, the ribosome changes from the pre-translocational (PRE) to the post-translocational (POST) state as the newly formed A-site-bound peptidyl-tRNA and P-site-bound deacylated tRNA move to the P and E sites, respectively. Catalyzes the coordinated movement of the two tRNA molecules, the mRNA and conformational changes in the ribosome. The protein is Elongation factor G of Chlorobium phaeobacteroides (strain BS1).